Here is a 378-residue protein sequence, read N- to C-terminus: Anhydro-N-acetylmuramic acid kinase (378 aa).

22–29 (GTSLDGAD) is an ATP binding site.

Belongs to the anhydro-N-acetylmuramic acid kinase family.

It catalyses the reaction 1,6-anhydro-N-acetyl-beta-muramate + ATP + H2O = N-acetyl-D-muramate 6-phosphate + ADP + H(+). Its pathway is amino-sugar metabolism; 1,6-anhydro-N-acetylmuramate degradation. It functions in the pathway cell wall biogenesis; peptidoglycan recycling. In terms of biological role, catalyzes the specific phosphorylation of 1,6-anhydro-N-acetylmuramic acid (anhMurNAc) with the simultaneous cleavage of the 1,6-anhydro ring, generating MurNAc-6-P. Is required for the utilization of anhMurNAc either imported from the medium or derived from its own cell wall murein, and thus plays a role in cell wall recycling. The sequence is that of Anhydro-N-acetylmuramic acid kinase from Bordetella petrii (strain ATCC BAA-461 / DSM 12804 / CCUG 43448).